A 359-amino-acid chain; its full sequence is S-geranylgeranyl-glutathione receptor P2RY8 (359 aa).

The Extracellular segment spans residues 1–19; sequence MQVPNSTGPDNATLQMLRN. N-linked (GlcNAc...) asparagine glycosylation is found at Asn-5 and Asn-11. The chain crosses the membrane as a helical span at residues 20–40; it reads PAIAVALPVVYSLVAAVSIPG. The Cytoplasmic portion of the chain corresponds to 41 to 57; it reads NLFSLWVLCRRMGPRSP. Residues 58 to 78 form a helical membrane-spanning segment; it reads SVIFMINLSVTDLMLASVLPF. Residues 79–88 lie on the Extracellular side of the membrane; it reads QIYYHCNRHH. The chain crosses the membrane as a helical span at residues 89–109; sequence WVFGVLLCNVVTVAFYANMYS. Residues 110–138 are Cytoplasmic-facing; that stretch reads SILTMTCISVERFLGVLYPLSSKRWRRRR. Residues 139 to 159 traverse the membrane as a helical segment; that stretch reads YAVAACAGTWLLLLTALSPLA. The Extracellular portion of the chain corresponds to 160–187; the sequence is RTDLTYPVHALGIITCFDVLKWTMLPSV. The chain crosses the membrane as a helical span at residues 188 to 208; it reads AMWAVFLFTIFILLFLIPFVI. Over 209 to 237 the chain is Cytoplasmic; sequence TVACYTATILKLLRTEEAHGREQRRRAVG. The chain crosses the membrane as a helical span at residues 238-258; it reads LAAVVLLAFVTCFAPNNFVLL. The Extracellular segment spans residues 259–275; it reads AHIVSRLFYGKSYYHVY. A helical membrane pass occupies residues 276 to 296; that stretch reads KLTLCLSCLNNCLDPFVYYFA. Over 297 to 359 the chain is Cytoplasmic; the sequence is SREFQLRLRE…PGLQRQESVF (63 aa). The disordered stretch occupies residues 329 to 359; the sequence is RTTSVRSEAGAHPEGMEGATRPGLQRQESVF.

The protein belongs to the G-protein coupled receptor 1 family. In terms of tissue distribution, barely detectable in normal blood leukocytes. Weaker expression was seen in heart, kidney and lung. Not detected in brain. Expressed in B cells and follicular helper T cells in germinal centers (at protein level).

Its subcellular location is the cell membrane. Its function is as follows. G protein-coupled receptor for S-geranylgeranyl-glutathione (GGG), an endogenous metabolite present in lymphoid tissues. Couples the binding of GGG to the activation of GNA13 and downstream repression of AKT activation in lymphocytes defining their positioning and growth within lymphoid organs. In lymphoid follicles, confines B cells and follicular helper T cells in germinal centers (GCs) in response to GGG local gradients established by GGT5 (via GGG catabolism) and ABCC1 (via extracellular transport) with lower concentrations of GGG found in the follicular dendritic cell network region around which germinal centers are formed. In the bone marrow, also in response to GGG gradients established by GGT5 and ABCC1, it restricts chemotactic transmigration of B cells, T cells and NK cells from blood vessels to the bone marrow parenchyma. Contributes to GNA13-dependent pathway that suppresses GC B cell growth. The polypeptide is S-geranylgeranyl-glutathione receptor P2RY8 (Homo sapiens (Human)).